A 149-amino-acid polypeptide reads, in one-letter code: NPC intracellular cholesterol transporter 2 (149 aa).

The first 21 residues, 1 to 21 (MRLLVAAFLLLALGDLGPGGA), serve as a signal peptide directing secretion. Cystine bridges form between Cys-27–Cys-140, Cys-42–Cys-47, and Cys-93–Cys-99. Asn-58 carries N-linked (GlcNAc...) asparagine glycosylation. Lys-116 carries the N6-acetyllysine modification.

The protein belongs to the NPC2 family. In terms of assembly, interacts with NPC1 (via the second lumenal domain) in a cholestrol-dependent manner. Interacts with NUS1/NgBR, the interaction stabilizes NCP2 and regulates cholesterol trafficking. Interacts with DHDDS. Interacts with NEDD4L (via C2 domain). Interacts with NPC1L1. As to expression, epididymis. High levels are found in the caput and corpus regions. Weaker levels in the distal cauda and in the efferent ducts.

The protein resides in the secreted. Its subcellular location is the endoplasmic reticulum. It is found in the lysosome. It catalyses the reaction cholesterol(in) = cholesterol(out). In terms of biological role, intracellular cholesterol transporter which acts in concert with NPC1 and plays an important role in the egress of cholesterol from the lysosomal compartment. Unesterified cholesterol that has been released from LDLs in the lumen of the late endosomes/lysosomes is transferred by NPC2 to the cholesterol-binding pocket in the N-terminal domain of NPC1. May bind and mobilize cholesterol that is associated with membranes. NPC2 binds cholesterol with a 1:1 stoichiometry. Can bind a variety of sterols, including lathosterol, desmosterol and the plant sterols stigmasterol and beta-sitosterol. The secreted form of NCP2 regulates biliary cholesterol secretion via stimulation of ABCG5/ABCG8-mediated cholesterol transport. This chain is NPC intracellular cholesterol transporter 2, found in Canis lupus familiaris (Dog).